A 219-amino-acid chain; its full sequence is Transcriptional regulator AcuR (219 aa).

The interval 1-25 is disordered; it reads MPLTDTPPSVPQKPRRGRPRGAPDA. Residues 26–86 enclose the HTH tetR-type domain; that stretch reads SLAHQSLIRA…ALIEAYDTYF (61 aa). Residues 49–68 constitute a DNA-binding region (H-T-H motif); the sequence is GVDEILKAARVPKGSFYHYF.

In terms of biological role, a transcriptional repressor for its operon. Probably binds to 2 operator sequences in the promoter. This is Transcriptional regulator AcuR (acuR) from Cereibacter sphaeroides (strain ATCC 17023 / DSM 158 / JCM 6121 / CCUG 31486 / LMG 2827 / NBRC 12203 / NCIMB 8253 / ATH 2.4.1.) (Rhodobacter sphaeroides).